The sequence spans 2168 residues: Genome polyprotein (2168 aa).

A disordered region spans residues 1-20; it reads MGMQMSKNTAGSHTTVTQAS. G2 is lipidated: N-myristoyl glycine; by host. Over 2 to 1479 the chain is Cytoplasmic; the sequence is GMQMSKNTAG…NVSIATTILS (1478 aa). 2 amphipathic alpha-helix regions span residues 551–567 and 554–575; these read ALQA…ISSV and APVE…TAQD. A compositionally biased stretch (polar residues) spans 576–589; it reads TQPSSHNISTSETP. The disordered stretch occupies residues 576–607; the sequence is TQPSSHNISTSETPALQAAETGASSNASDEGM. Active-site for protease 2A activity residues include H856 and D874. C891 and C893 together coordinate Zn(2+). Catalysis depends on C945, which acts as the For protease 2A activity. Positions 951 and 953 each coordinate Zn(2+). Positions 1085 to 1157 are membrane-binding; that stretch reads GDDWLKKFTS…EHSCPTTEQQ (73 aa). Residues 1085-1223 form an oligomerization region; that stretch reads GDDWLKKFTS…TAGTGKSLAT (139 aa). The tract at residues 1106–1110 is RNA-binding; the sequence is AEKIM. The SF3 helicase domain occupies 1189–1347; it reads EKRILGYIQF…YKTHNGTLDV (159 aa). Residues C1354, C1365, and C1370 each coordinate Zn(2+). The C4-type; degenerate zinc finger occupies 1354–1370; it reads CEDCCPANFKTCMPLIC. The segment at 1397–1404 is RNA-binding; it reads EWKRRNQV. Residues 1408-1413 are oligomerization; it reads YVRLFQ. An intramembrane segment occupies 1480–1495; the sequence is SLVLLTSVITLVYLVY. Over 1496–2168 the chain is Cytoplasmic; sequence RLFAGYQGPY…SLLREWYEKF (673 aa). Y1505 is subject to O-(5'-phospho-RNA)-tyrosine. Residues 1525–1703 form the Peptidase C3 domain; that stretch reads GPLMDFGVGM…FCAALKRSYF (179 aa). Catalysis depends on for protease 3C activity residues H1564, E1595, and C1671. One can recognise a RdRp catalytic domain in the interval 1934-2048; the sequence is GELFGFDYTA…ASYPYRIDPA (115 aa). The Mg(2+) site is built by D1940 and D2035.

The protein belongs to the picornaviruses polyprotein family. Interacts with capsid protein VP1 and capsid protein VP3 to form heterotrimeric protomers. As to quaternary structure, interacts with capsid protein VP0, and capsid protein VP3 to form heterotrimeric protomers. Five protomers subsequently associate to form pentamers which serve as building blocks for the capsid. Interacts with capsid protein VP2, capsid protein VP3 and capsid protein VP4 following cleavage of capsid protein VP0. In terms of assembly, interacts with capsid protein VP1 and capsid protein VP3 in the mature capsid. Interacts with capsid protein VP0 and capsid protein VP1 to form heterotrimeric protomers. Five protomers subsequently associate to form pentamers which serve as building blocks for the capsid. Interacts with capsid protein VP4 in the mature capsid. Interacts with protein 2C; this interaction may be important for virion morphogenesis. As to quaternary structure, interacts with capsid protein VP1 and capsid protein VP3. In terms of assembly, homodimer. Homohexamer; forms a hexameric ring structure with 6-fold symmetry characteristic of AAA+ ATPases. Interacts (via N-terminus) with host RTN3 (via reticulon domain); this interaction is important for viral replication. Interacts with capsid protein VP3; this interaction may be important for virion morphogenesis. As to quaternary structure, interacts with protein 3CD. In terms of assembly, homodimer. Interacts with host GBF1. Interacts (via GOLD domain) with host ACBD3 (via GOLD domain); this interaction allows the formation of a viral protein 3A/ACBD3 heterotetramer with a 2:2 stoichiometry, which will stimulate the recruitment of host PI4KB in order to synthesize PI4P at the viral RNA replication sites. Interacts with RNA-directed RNA polymerase. As to quaternary structure, interacts with protein 3AB and with RNA-directed RNA polymerase. In terms of assembly, interacts with Viral protein genome-linked and with protein 3CD. It depends on Mg(2+) as a cofactor. Post-translationally, specific enzymatic cleavages in vivo by the viral proteases yield processing intermediates and the mature proteins. In terms of processing, myristoylation is required for the formation of pentamers during virus assembly. Further assembly of 12 pentamers and a molecule of genomic RNA generates the provirion. During virion maturation, immature virions are rendered infectious following cleavage of VP0 into VP4 and VP2. This maturation seems to be an autocatalytic event triggered by the presence of RNA in the capsid and it is followed by a conformational change infectious virion. Post-translationally, myristoylation is required during RNA encapsidation and formation of the mature virus particle. In terms of processing, VPg is uridylylated by the polymerase into VPg-pUpU. This acts as a nucleotide-peptide primer for the genomic RNA replication.

It localises to the virion. Its subcellular location is the host cytoplasm. It is found in the host cytoplasmic vesicle membrane. The protein resides in the host nucleus. It carries out the reaction a ribonucleoside 5'-triphosphate + H2O = a ribonucleoside 5'-diphosphate + phosphate + H(+). The enzyme catalyses Selective cleavage of Tyr-|-Gly bond in the picornavirus polyprotein.. The catalysed reaction is RNA(n) + a ribonucleoside 5'-triphosphate = RNA(n+1) + diphosphate. It catalyses the reaction Selective cleavage of Gln-|-Gly bond in the poliovirus polyprotein. In other picornavirus reactions Glu may be substituted for Gln, and Ser or Thr for Gly.. Replication or transcription is subject to high level of random mutations by the nucleotide analog ribavirin. Forms an icosahedral capsid of pseudo T=3 symmetry with capsid proteins VP2 and VP3. The capsid is 300 Angstroms in diameter, composed of 60 copies of each capsid protein and enclosing the viral positive strand RNA genome. Capsid protein VP1 mainly forms the vertices of the capsid. Capsid protein VP1 interacts with host cell receptor to provide virion attachment to target host cells. This attachment induces virion internalization. Tyrosine kinases are probably involved in the entry process. After binding to its receptor, the capsid undergoes conformational changes. Capsid protein VP1 N-terminus (that contains an amphipathic alpha-helix) and capsid protein VP4 are externalized. Together, they shape a pore in the host membrane through which viral genome is translocated to host cell cytoplasm. In terms of biological role, forms an icosahedral capsid of pseudo T=3 symmetry with capsid proteins VP2 and VP3. The capsid is 300 Angstroms in diameter, composed of 60 copies of each capsid protein and enclosing the viral positive strand RNA genome. Functionally, lies on the inner surface of the capsid shell. After binding to the host receptor, the capsid undergoes conformational changes. Capsid protein VP4 is released, Capsid protein VP1 N-terminus is externalized, and together, they shape a pore in the host membrane through which the viral genome is translocated into the host cell cytoplasm. Its function is as follows. Component of immature procapsids, which is cleaved into capsid proteins VP4 and VP2 after maturation. Allows the capsid to remain inactive before the maturation step. Cysteine protease that cleaves viral polyprotein and specific host proteins. It is responsible for the autocatalytic cleavage between the P1 and P2 regions, which is the first cleavage occurring in the polyprotein. Also cleaves the host translation initiation factor EIF4G1, in order to shut down the capped cellular mRNA translation. Inhibits the host nucleus-cytoplasm protein and RNA trafficking by cleaving host members of the nuclear pores. Counteracts stress granule formation probably by antagonizing its assembly or promoting its dissassembly. In terms of biological role, plays an essential role in the virus replication cycle by acting as a viroporin. Creates a pore in the host endoplasmic reticulum and as a consequence releases Ca2+ in the cytoplasm of infected cell. In turn, high levels of cytoplasmic calcium may trigger membrane trafficking and transport of viral ER-associated proteins to viroplasms, sites of viral genome replication. Functionally, induces and associates with structural rearrangements of intracellular membranes. Displays RNA-binding, nucleotide binding and NTPase activities. May play a role in virion morphogenesis and viral RNA encapsidation by interacting with the capsid protein VP3. Its function is as follows. Localizes the viral replication complex to the surface of membranous vesicles. Together with protein 3CD binds the Cis-Active RNA Element (CRE) which is involved in RNA synthesis initiation. Acts as a cofactor to stimulate the activity of 3D polymerase, maybe through a nucleid acid chaperone activity. Localizes the viral replication complex to the surface of membranous vesicles. It inhibits host cell endoplasmic reticulum-to-Golgi apparatus transport and causes the disassembly of the Golgi complex, possibly through GBF1 interaction. This would result in depletion of MHC, trail receptors and IFN receptors at the host cell surface. Plays an essential role in viral RNA replication by recruiting ACBD3 and PI4KB at the viral replication sites, thereby allowing the formation of the rearranged membranous structures where viral replication takes place. In terms of biological role, acts as a primer for viral RNA replication and remains covalently bound to viral genomic RNA. VPg is uridylylated prior to priming replication into VPg-pUpU. The oriI viral genomic sequence may act as a template for this. The VPg-pUpU is then used as primer on the genomic RNA poly(A) by the RNA-dependent RNA polymerase to replicate the viral genome. During genome replication, the VPg-RNA linkage is removed by the host TDP2, thereby accelerating replication. During the late stage of the replication cycle, host TDP2 is excluded from sites of viral RNA synthesis and encapsidation, allowing for the generation of progeny virions. Functionally, involved in the viral replication complex and viral polypeptide maturation. It exhibits protease activity with a specificity and catalytic efficiency that is different from protease 3C. Protein 3CD lacks polymerase activity. Protein 3CD binds to the 5'UTR of the viral genome. Its function is as follows. Replicates the viral genomic RNA on the surface of intracellular membranes. May form linear arrays of subunits that propagate along a strong head-to-tail interaction called interface-I. Covalently attaches UMP to a tyrosine of VPg, which is used to prime RNA synthesis. The positive stranded RNA genome is first replicated at virus induced membranous vesicles, creating a dsRNA genomic replication form. This dsRNA is then used as template to synthesize positive stranded RNA genomes. ss(+)RNA genomes are either translated, replicated or encapsidated. Major viral protease that mediates proteolytic processing of the polyprotein. Cleaves host EIF5B, contributing to host translation shutoff. Also cleaves host PABPC1, contributing to host translation shutoff. Cleaves host NLRP1, triggers host N-glycine-mediated degradation of the autoinhibitory NLRP1 N-terminal fragment. This Sus scrofa (Pig) protein is Genome polyprotein.